Consider the following 339-residue polypeptide: 2-deoxy-scyllo-inosamine dehydrogenase (339 aa).

Zn(2+) is bound by residues C37, H59, C88, C91, C94, C102, and E143.

Belongs to the zinc-containing alcohol dehydrogenase family. DOIA dehydrogenase subfamily. Requires Zn(2+) as cofactor.

The catalysed reaction is 2-deoxy-scyllo-inosamine + NADP(+) = 3-amino-2,3-dideoxy-scyllo-inosose + NADPH + H(+). The enzyme catalyses 2-deoxy-scyllo-inosamine + NAD(+) = 3-amino-2,3-dideoxy-scyllo-inosose + NADH + H(+). The protein operates within metabolic intermediate biosynthesis; 2-deoxystreptamine biosynthesis; 2-deoxystreptamine from D-glucose 6-phosphate: step 3/4. Its pathway is antibiotic biosynthesis; tobramycin biosynthesis. Catalyzes the oxidation of 2-deoxy-scyllo-inosamine (DOIA) with NAD(+) or NADP(+), forming 3-amino-2,3-dideoxy-scyllo-inosose (amino-DOI). The sequence is that of 2-deoxy-scyllo-inosamine dehydrogenase (tobE) from Streptoalloteichus tenebrarius (strain ATCC 17920 / DSM 40477 / JCM 4838 / CBS 697.72 / NBRC 16177 / NCIMB 11028 / NRRL B-12390 / A12253. 1 / ISP 5477) (Streptomyces tenebrarius).